We begin with the raw amino-acid sequence, 199 residues long: ATP-dependent Clp protease proteolytic subunit (199 aa).

The active-site Nucleophile is the S103. Residue H128 is part of the active site.

Belongs to the peptidase S14 family. Fourteen ClpP subunits assemble into 2 heptameric rings which stack back to back to give a disk-like structure with a central cavity, resembling the structure of eukaryotic proteasomes.

Its subcellular location is the cytoplasm. The catalysed reaction is Hydrolysis of proteins to small peptides in the presence of ATP and magnesium. alpha-casein is the usual test substrate. In the absence of ATP, only oligopeptides shorter than five residues are hydrolyzed (such as succinyl-Leu-Tyr-|-NHMec, and Leu-Tyr-Leu-|-Tyr-Trp, in which cleavage of the -Tyr-|-Leu- and -Tyr-|-Trp bonds also occurs).. Functionally, cleaves peptides in various proteins in a process that requires ATP hydrolysis. Has a chymotrypsin-like activity. Plays a major role in the degradation of misfolded proteins. This chain is ATP-dependent Clp protease proteolytic subunit, found in Photobacterium profundum (strain SS9).